The primary structure comprises 715 residues: MIYQGKAITVKPLEGGIVELNFDLKGESVNKFNRLTLSELRAAVDAIKADASVKGVIVTSGKDVFIVGADITEFVDNFQLPDEELMAGNLEANKIFSDFEDLDVPTVAAINGIALGGGLEMCLAADFRVMSATAKVGLPEVKLGIYPGFGGTVRLPRLIGCDNAVEWIASGKENKAEDALKVGAVDAVVAPEQLQAAALDLAKRAVAGELDHKARRQPKLEKLKLNAIEQMMAFETAKGFVAGQAGPNYPAPVEAIKSIQKAANFGRDKALEVEAAGFVKLAKTSVAQSLIGLFLNDQELKKKAKKYDEVAKDVKLAAVLGAGIMGGGIAYQSALKGTPILMKDIREEGIQMGLNEAAKLLGKRVEKGRLTPAKMAEALNGIRPTMSYGDFGNVDIVVEAVVENPKVKQAVLAEVEGAVKEDAIIASNTSTISISLLAQALKRPENFCGMHFFNPVHMMPLVEVIRGEKTGETAIATTVAYAKKMGKSPIVVNDCPGFLVNRVLFPYFGGFAKLLSFGVDFVRIDKVMEKFGWPMGPAYLSDVVGIDTGHHGRDVMAEGFPDRMAVEGKTAVDVMYEANRLGQKNGKGFYAYETDKRGKPKKVTDPQAYEVLKPIVVEQREVTDEDIVNFMMIPLCLETVRCLEDGIVETAAEADMGLIYGIGFPPFRGGALRYIDSIGVAEFVALADKYAELGALYHPTAKLREMAKNGQKFFG.

Residues 1–190 form an enoyl-CoA hydratase/isomerase region; that stretch reads MIYQGKAITV…KVGAVDAVVA (190 aa). Aspartate 297 is a substrate binding site. Residues 312 to 715 form a 3-hydroxyacyl-CoA dehydrogenase region; that stretch reads KDVKLAAVLG…MAKNGQKFFG (404 aa). NAD(+) contacts are provided by residues methionine 325, aspartate 344, 401-403, lysine 408, and serine 430; that span reads VVE. Catalysis depends on histidine 451, which acts as the For 3-hydroxyacyl-CoA dehydrogenase activity. An NAD(+)-binding site is contributed by asparagine 454. Substrate is bound by residues asparagine 501 and tyrosine 660.

The protein in the N-terminal section; belongs to the enoyl-CoA hydratase/isomerase family. This sequence in the C-terminal section; belongs to the 3-hydroxyacyl-CoA dehydrogenase family. As to quaternary structure, heterotetramer of two alpha chains (FadB) and two beta chains (FadA).

The enzyme catalyses a (3S)-3-hydroxyacyl-CoA + NAD(+) = a 3-oxoacyl-CoA + NADH + H(+). The catalysed reaction is a (3S)-3-hydroxyacyl-CoA = a (2E)-enoyl-CoA + H2O. It carries out the reaction a 4-saturated-(3S)-3-hydroxyacyl-CoA = a (3E)-enoyl-CoA + H2O. It catalyses the reaction (3S)-3-hydroxybutanoyl-CoA = (3R)-3-hydroxybutanoyl-CoA. The enzyme catalyses a (3Z)-enoyl-CoA = a 4-saturated (2E)-enoyl-CoA. The catalysed reaction is a (3E)-enoyl-CoA = a 4-saturated (2E)-enoyl-CoA. The protein operates within lipid metabolism; fatty acid beta-oxidation. In terms of biological role, involved in the aerobic and anaerobic degradation of long-chain fatty acids via beta-oxidation cycle. Catalyzes the formation of 3-oxoacyl-CoA from enoyl-CoA via L-3-hydroxyacyl-CoA. It can also use D-3-hydroxyacyl-CoA and cis-3-enoyl-CoA as substrate. The polypeptide is Fatty acid oxidation complex subunit alpha (Pseudomonas aeruginosa (strain LESB58)).